Consider the following 523-residue polypeptide: Tyrosine/DOPA decarboxylase 5 (523 aa).

Polar residues predominate over residues 1 to 19; sequence MGSLPTDNLESMSICSQNP. Disordered stretches follow at residues 1-20 and 47-66; these read MGSL…QNPL and SRSQ…APNH. N6-(pyridoxal phosphate)lysine is present on K321.

It belongs to the group II decarboxylase family. As to quaternary structure, homodimer. It depends on pyridoxal 5'-phosphate as a cofactor. As to expression, roots.

The enzyme catalyses L-tyrosine + H(+) = tyramine + CO2. It carries out the reaction L-dopa + H(+) = dopamine + CO2. The catalysed reaction is 5-hydroxy-L-tryptophan + H(+) = serotonin + CO2. Its function is as follows. May play an important role in providing precursors for alkaloid synthesis in the roots and germinating seedlings. In Papaver somniferum (Opium poppy), this protein is Tyrosine/DOPA decarboxylase 5 (TYDC5).